A 296-amino-acid chain; its full sequence is Ribosomal protein L11 methyltransferase (296 aa).

S-adenosyl-L-methionine contacts are provided by T147, G168, D190, and N232.

The protein belongs to the methyltransferase superfamily. PrmA family.

The protein localises to the cytoplasm. The enzyme catalyses L-lysyl-[protein] + 3 S-adenosyl-L-methionine = N(6),N(6),N(6)-trimethyl-L-lysyl-[protein] + 3 S-adenosyl-L-homocysteine + 3 H(+). Methylates ribosomal protein L11. The polypeptide is Ribosomal protein L11 methyltransferase (Marinomonas sp. (strain MWYL1)).